A 289-amino-acid chain; its full sequence is Purine nucleoside phosphorylase (289 aa).

At M1 the chain carries N-acetylmethionine. Residues S33, H64, and 84–86 (RFH) contribute to the phosphate site. Residue Y88 coordinates a purine D-ribonucleoside. A phosphate-binding site is contributed by A116. A purine D-ribonucleoside is bound by residues E201 and M219. S220 serves as a coordination point for phosphate. A purine D-ribonucleoside is bound by residues N243 and H257.

Belongs to the PNP/MTAP phosphorylase family. In terms of assembly, homotrimer.

It localises to the cytoplasm. The enzyme catalyses inosine + phosphate = alpha-D-ribose 1-phosphate + hypoxanthine. It catalyses the reaction guanosine + phosphate = alpha-D-ribose 1-phosphate + guanine. The catalysed reaction is 2'-deoxyguanosine + phosphate = 2-deoxy-alpha-D-ribose 1-phosphate + guanine. It carries out the reaction 2'-deoxyinosine + phosphate = 2-deoxy-alpha-D-ribose 1-phosphate + hypoxanthine. The protein operates within purine metabolism; purine nucleoside salvage. Functionally, catalyzes the phosphorolytic breakdown of the N-glycosidic bond in the beta-(deoxy)ribonucleoside molecules, with the formation of the corresponding free purine bases and pentose-1-phosphate. Preferentially acts on 6-oxopurine nucleosides including inosine and guanosine. This chain is Purine nucleoside phosphorylase (Pnp), found in Mus musculus (Mouse).